The following is a 607-amino-acid chain: V-type proton ATPase catalytic subunit A (607 aa).

An ATP-binding site is contributed by 251–258; sequence GAFGCGKT.

The protein belongs to the ATPase alpha/beta chains family. V-ATPase is a heteromultimeric enzyme composed of a peripheral catalytic V1 complex (components A to H) attached to an integral membrane V0 proton pore complex (components: a, c, c', c'', d, e, f and VOA1).

Its subcellular location is the vacuole membrane. The enzyme catalyses ATP + H2O + 4 H(+)(in) = ADP + phosphate + 5 H(+)(out). In terms of biological role, catalytic subunit of the V1 complex of vacuolar(H+)-ATPase (V-ATPase), a multisubunit enzyme composed of a peripheral complex (V1) that hydrolyzes ATP and a membrane integral complex (V0) that translocates protons. V-ATPase is responsible for acidifying and maintaining the pH of intracellular compartments. This chain is V-type proton ATPase catalytic subunit A (VMA1), found in Encephalitozoon cuniculi (strain GB-M1) (Microsporidian parasite).